A 1587-amino-acid chain; its full sequence is NHS-like protein 1 (1587 aa).

A Phosphoserine modification is found at Ser24. Disordered regions lie at residues 140-163 and 176-202; these read FAAG…KCSL and RPKT…PLPT. Residues 179–196 show a composition bias toward polar residues; the sequence is TPTSGDFSDLHTQTNWTK. Ser197 and Ser328 each carry phosphoserine. Residues 431 to 446 are compositionally biased toward polar residues; that stretch reads SAGQLDSRTPGSSSYS. Disordered regions lie at residues 431–470 and 549–584; these read SAGQ…PRHH and SEPW…VSSC. Residues 449–470 are compositionally biased toward basic and acidic residues; the sequence is KPRDRPTPRCSVKDDHQSPRHH. The residue at position 563 (Ser563) is a Phosphoserine. The segment covering 573-584 has biased composition (polar residues); that stretch reads GCSTPTSNVSSC. At Ser629 the chain carries Phosphoserine. Disordered stretches follow at residues 661 to 687, 705 to 767, and 789 to 1059; these read KAKK…QTNG, SLPG…SSVK, and NPTG…RPPM. Positions 705-720 are enriched in low complexity; the sequence is SLPGKGGSSPSQSPCS. Polar residues-rich tracts occupy residues 730-750, 757-767, 792-801, and 838-855; these read SRSQ…TPNV, TPSQSDTSSVK, GGCSANTEAA, and RVTS…TPTA. The span at 885 to 911 shows a compositional bias: low complexity; that stretch reads SLISSMSISSSSTSLSSNTSTEGSGTM. Composition is skewed to pro residues over residues 923-934, 958-972, and 998-1021; these read APPPPPLPPLPS, PLPP…PPEA, and SLPP…PPLD. A compositionally biased stretch (basic and acidic residues) spans 1040–1055; sequence SSREALRRPANKEEGC. Position 1079 is a phosphoserine (Ser1079). Disordered stretches follow at residues 1083-1534 and 1565-1587; these read AVLF…ARRA and VDGI…EQKS. Polar residues-rich tracts occupy residues 1089 to 1099 and 1112 to 1141; these read PSAQEQRTPTA and SRNS…SQSQ. 2 positions are modified to phosphoserine: Ser1157 and Ser1218. Over residues 1222 to 1234 the composition is skewed to basic and acidic residues; that stretch reads AEGEAVRSQEEKS. Positions 1275-1285 are enriched in polar residues; that stretch reads QPNTSPGPTQE. Basic and acidic residues predominate over residues 1360–1370; it reads GRKDSEDDHTR. Phosphoserine is present on residues Ser1373 and Ser1375. Thr1379 carries the phosphothreonine modification. The segment covering 1392-1409 has biased composition (polar residues); sequence QVGSIQRSIKKSTTSSDN. Over residues 1434–1447 the composition is skewed to basic and acidic residues; sequence KSTDPRFQRSRSEP. Composition is skewed to low complexity over residues 1448 to 1460 and 1484 to 1503; these read SADS…SCSP and SGPR…SRYS. Positions 1576–1587 are enriched in polar residues; sequence PSEQCGGTEQKS.

The protein belongs to the NHS family.

In Mus musculus (Mouse), this protein is NHS-like protein 1 (Nhsl1).